Consider the following 327-residue polypeptide: Nucleotide-binding protein Mflv_3714 (327 aa).

The segment covering 1–22 (MTRQGMRDDLRGEADSVVHDGT) has biased composition (basic and acidic residues). Residues 1–29 (MTRQGMRDDLRGEADSVVHDGTDDIDNEN) form a disordered region. Position 50 to 57 (50 to 57 (GLSGAGRG)) interacts with ATP. Residue 101-104 (DVRS) participates in GTP binding.

The protein belongs to the RapZ-like family.

Displays ATPase and GTPase activities. The chain is Nucleotide-binding protein Mflv_3714 from Mycolicibacterium gilvum (strain PYR-GCK) (Mycobacterium gilvum (strain PYR-GCK)).